The chain runs to 141 residues: Large ribosomal subunit protein uL16 (141 aa).

It belongs to the universal ribosomal protein uL16 family. Part of the 50S ribosomal subunit.

Functionally, binds 23S rRNA and is also seen to make contacts with the A and possibly P site tRNAs. The chain is Large ribosomal subunit protein uL16 from Geobacillus kaustophilus (strain HTA426).